A 482-amino-acid chain; its full sequence is E1B 55 kDa protein (482 aa).

Residues Val73–Ser94 are disordered. Over residues Ala83–Ser94 the composition is skewed to basic and acidic residues. Residues Ser476 and Ser477 each carry the phosphoserine modification.

The protein belongs to the adenoviridae E1B 55 kDa protein family. Interacts with host PML-4 and PML-5; this interaction promotes efficient subnuclear targeting of E1B-55K to PML nuclear bodies. Interacts with E4-ORF3 protein. Interacts with E4-ORF6 protein.

The protein resides in the host nucleus. It localises to the host cytoplasm. Its function is as follows. Plays a major role to prevent cellular inhibition of viral genome replication. Assembles an SCF-like E3 ubiquitin ligase complex based on the cellular proteins ELOB, ELOC, CUL5 and RBX1, in cooperation with viral E4orf6. This viral RING-type ligase ubiquitinates cellular substrates and targets them to proteasomal degradation: TP53/p53, LIG4, MRE11-RAD50-NBS1 (MRN) complex, ITGA3, DAXX and BLM. E1B-55K probably acts as the substrate-specific adapter of the SCF-like E3 ubiquitin ligase complex. Degradation of host TP53/p53 activity is essential for preventing E1A-induced TP53 accumulation that would otherwise lead to cell apoptosis and growth arrest. E1B-55K also inactivates TP53 transcription-factor activity by binding its transactivation domain. E1B-55K also functions as a SUMO1 E3 ligase for TP53 which causes the latter to be sequestered in promyelocytic leukemia (PML) nuclear bodies thereby contributing to maximal inhibition of TP53 function. The sequence is that of E1B 55 kDa protein from Homo sapiens (Human).